A 959-amino-acid chain; its full sequence is rDNA transcriptional regulator pol5 (959 aa).

Phosphoserine is present on residues Ser-742 and Ser-743. Residues 936–959 are disordered; that stretch reads HQQTSTAASSPQKTGHHENEKTNH. Residues 937 to 948 show a composition bias toward polar residues; it reads QQTSTAASSPQK. Residues 950-959 show a composition bias toward basic and acidic residues; the sequence is GHHENEKTNH.

It belongs to the MYBBP1A family. Interacts with cdc10.

It is found in the nucleus. Its function is as follows. Plays an important role in the regulation of rRNA transcription. Binds to rDNA promoter fragments. In Schizosaccharomyces pombe (strain 972 / ATCC 24843) (Fission yeast), this protein is rDNA transcriptional regulator pol5 (pol5).